Here is a 109-residue protein sequence, read N- to C-terminus: Insulin (109 aa).

A signal peptide spans 1 to 24 (MAPWMHLLTVLALLALWGPNSVQA). 3 disulfide bridges follow: C31/C93, C43/C106, and C92/C97. Residues 56 to 84 (ELEDLQVEQAELGLEAGGLQPSALEMILQ) constitute a propeptide, c peptide.

It belongs to the insulin family. Heterodimer of a B chain and an A chain linked by two disulfide bonds.

It is found in the secreted. Its function is as follows. Insulin decreases blood glucose concentration. It increases cell permeability to monosaccharides, amino acids and fatty acids. It accelerates glycolysis, the pentose phosphate cycle, and glycogen synthesis in liver. This Octodon degus (Degu) protein is Insulin (INS).